We begin with the raw amino-acid sequence, 426 residues long: Serine--tRNA ligase (426 aa).

233 to 235 is an L-serine binding site; the sequence is TSE. Position 264–266 (264–266) interacts with ATP; the sequence is RAE. Residue E287 participates in L-serine binding. Position 351 to 354 (351 to 354) interacts with ATP; the sequence is EISS. Residue S387 coordinates L-serine.

Belongs to the class-II aminoacyl-tRNA synthetase family. Type-1 seryl-tRNA synthetase subfamily. Homodimer. The tRNA molecule binds across the dimer.

The protein resides in the cytoplasm. The catalysed reaction is tRNA(Ser) + L-serine + ATP = L-seryl-tRNA(Ser) + AMP + diphosphate + H(+). It carries out the reaction tRNA(Sec) + L-serine + ATP = L-seryl-tRNA(Sec) + AMP + diphosphate + H(+). The protein operates within aminoacyl-tRNA biosynthesis; selenocysteinyl-tRNA(Sec) biosynthesis; L-seryl-tRNA(Sec) from L-serine and tRNA(Sec): step 1/1. Functionally, catalyzes the attachment of serine to tRNA(Ser). Is also able to aminoacylate tRNA(Sec) with serine, to form the misacylated tRNA L-seryl-tRNA(Sec), which will be further converted into selenocysteinyl-tRNA(Sec). This is Serine--tRNA ligase from Xanthomonas euvesicatoria pv. vesicatoria (strain 85-10) (Xanthomonas campestris pv. vesicatoria).